Reading from the N-terminus, the 472-residue chain is Inhibitor of Apoptosis OPG037 (472 aa).

ANK repeat units follow at residues 97–126 (DGNYPLHIASKINNNRIVAMLLTHGADPNA), 130–161 (HNKTPLYYLSGTDDEVIERINLLVQYGAKINN), 233–263 (DGNTPLHIVCSKTVKNVDIIDLLLPSTDVNK), 267–297 (FGDSPLTLLIKTLSPAHLINKLLSTSNVITD), 322–351 (YDSTDFKMAVEVGSIRCVKYLLDNDIICED), and 353–377 (MYYAVLSEYETMVDYLLFNHFSVDF).

Belongs to the orthopoxvirus OPG037 protein family. In terms of assembly, may interact with host caspase-9-Apaf-1 complex.

It is found in the host cytoplasm. In terms of biological role, inhibits host apoptosis. Acts by associating with host apoptosome. This chain is Inhibitor of Apoptosis OPG037 (OPG037), found in Vaccinia virus (strain Western Reserve) (VACV).